The primary structure comprises 939 residues: Isoleucine--tRNA ligase (939 aa).

The short motif at 58-68 is the 'HIGH' region element; sequence PYANGDIHIGH. E574 is a binding site for L-isoleucyl-5'-AMP. Residues 615-619 carry the 'KMSKS' region motif; that stretch reads KMSKS. K618 lines the ATP pocket. Residues C902, C905, C922, and C925 each contribute to the Zn(2+) site.

Belongs to the class-I aminoacyl-tRNA synthetase family. IleS type 1 subfamily. In terms of assembly, monomer. It depends on Zn(2+) as a cofactor.

It localises to the cytoplasm. It carries out the reaction tRNA(Ile) + L-isoleucine + ATP = L-isoleucyl-tRNA(Ile) + AMP + diphosphate. Its function is as follows. Catalyzes the attachment of isoleucine to tRNA(Ile). As IleRS can inadvertently accommodate and process structurally similar amino acids such as valine, to avoid such errors it has two additional distinct tRNA(Ile)-dependent editing activities. One activity is designated as 'pretransfer' editing and involves the hydrolysis of activated Val-AMP. The other activity is designated 'posttransfer' editing and involves deacylation of mischarged Val-tRNA(Ile). In Aromatoleum aromaticum (strain DSM 19018 / LMG 30748 / EbN1) (Azoarcus sp. (strain EbN1)), this protein is Isoleucine--tRNA ligase.